A 946-amino-acid polypeptide reads, in one-letter code: Translation initiation factor IF-2 (946 aa).

2 disordered regions span residues 58-250 (AERK…AVVI) and 301-324 (VSRD…KSLS). 2 stretches are compositionally biased toward low complexity: residues 102–165 (EPPQ…QPAA) and 174–185 (AQPSAPQPAAAQ). Pro residues predominate over residues 186 to 211 (PRPPQPPMPSRPPPAGYRPAPPPGAR). Residues 212–229 (PPMSAAPGAPAQPGAAAQ) show a composition bias toward low complexity. One can recognise a tr-type G domain in the interval 445-614 (IRPPVVTVMG…ALQSEVLELK (170 aa)). The segment at 454–461 (GHVDHGKT) is G1. 454 to 461 (GHVDHGKT) contacts GTP. Residues 479–483 (GITQH) form a G2 region. Residues 500 to 503 (DTPG) form a G3 region. GTP is bound by residues 500 to 504 (DTPGH) and 554 to 557 (NKVD). The interval 554–557 (NKVD) is G4. The tract at residues 590–592 (SAR) is G5.

It belongs to the TRAFAC class translation factor GTPase superfamily. Classic translation factor GTPase family. IF-2 subfamily.

It localises to the cytoplasm. In terms of biological role, one of the essential components for the initiation of protein synthesis. Protects formylmethionyl-tRNA from spontaneous hydrolysis and promotes its binding to the 30S ribosomal subunits. Also involved in the hydrolysis of GTP during the formation of the 70S ribosomal complex. The chain is Translation initiation factor IF-2 from Anaeromyxobacter sp. (strain K).